A 205-amino-acid chain; its full sequence is Glycerol-3-phosphate acyltransferase (205 aa).

Over 1–3 (MSA) the chain is Periplasmic. A helical membrane pass occupies residues 4-24 (IAPGMILIAYLCGSISSAILV). Residues 25–52 (CRLCGLPDPRTSGSGNPGATNVLRIGGK) lie on the Cytoplasmic side of the membrane. The helical transmembrane segment at 53-73 (GAAVAVLIFDVLKGMLPVWGA) threads the bilayer. The Periplasmic segment spans residues 74-80 (YELGVSP). The helical transmembrane segment at 81–101 (FWLGLIAIAACLGHIWPVFFG) threads the bilayer. Residues 102–111 (FKGGKGVATA) are Cytoplasmic-facing. Residues 112 to 132 (FGAIAPIGWDLTGVMAGTWLL) form a helical membrane-spanning segment. Residues 133 to 137 (TVLLS) lie on the Periplasmic side of the membrane. Residues 138–158 (GYSSLGAIVSALIAPFYVWWF) traverse the membrane as a helical segment. Residues 159-205 (KPQFTFPVSMLSCLILLRHHDNIQRLWRRQETKIWTKFKRKREKDPE) lie on the Cytoplasmic side of the membrane.

This sequence belongs to the PlsY family. As to quaternary structure, probably interacts with PlsX.

Its subcellular location is the cell inner membrane. The enzyme catalyses sn-glycerol 3-phosphate + an acyl-CoA = a 1-acyl-sn-glycero-3-phosphate + CoA. The catalysed reaction is a fatty acyl-[ACP] + sn-glycerol 3-phosphate = a 1-acyl-sn-glycero-3-phosphate + holo-[ACP]. It participates in lipid metabolism; phospholipid metabolism. In terms of biological role, catalyzes the transfer of an acyl group from acyl-ACP to glycerol-3-phosphate (G3P) to form lysophosphatidic acid (LPA). This enzyme can also utilize acyl-CoA as fatty acyl donor, but not acyl-PO(4). This Escherichia coli O8 (strain IAI1) protein is Glycerol-3-phosphate acyltransferase.